The chain runs to 497 residues: MMKESSKWIAAFVEIIIENGDWTETDRYYLTNRIAKLVGCDFFEQPEAVACEQEPLRVVEHLLNIAQANHQIDDSITEAEQLEAELMDFITPTPTIINQKFMDYYQESPRKATDYFYQLCKTNNYIKTKAIAKNIIFPMDSPYGKLEITINLSKPEKDARKILAEKKMSQKKYPACMLCMENEGYYGRVNYPARTNHRIIRLNLEDEAWGFQYSPYAYYNEHAIFLDQQHREMKIEKKTFQRLLKITELFPEYFVGSNADLPIVGGSILSHDHYQAGRHTFPMDLAPMEKRFSLKKYPEITAGILKWPMSVIRLQSDRQEELVEAAELILTKWRNYSDERVSVRAYSKDGTPHHTITPIARRKGSLFELDLVLRDNNVSEEFPDGIFHPHPEVQHIKQENIGLIEVMGLAILPPRLAQELREVEKYLLKQPNQIAESHRAWADELSQQTITEANVKEVIQQGIGTIFVQILTDAGVFKRDEEGRRAFERFIQCIEND.

The protein belongs to the galactose-1-phosphate uridylyltransferase type 2 family.

It is found in the cytoplasm. The catalysed reaction is alpha-D-galactose 1-phosphate + UDP-alpha-D-glucose = alpha-D-glucose 1-phosphate + UDP-alpha-D-galactose. It participates in carbohydrate metabolism; galactose metabolism. The protein is Galactose-1-phosphate uridylyltransferase of Enterococcus faecalis (strain ATCC 700802 / V583).